A 239-amino-acid chain; its full sequence is 1-(5-phosphoribosyl)-5-[(5-phosphoribosylamino)methylideneamino] imidazole-4-carboxamide isomerase (239 aa).

Residue D8 is the Proton acceptor of the active site. The active-site Proton donor is the D129.

The protein belongs to the HisA/HisF family.

It localises to the cytoplasm. The enzyme catalyses 1-(5-phospho-beta-D-ribosyl)-5-[(5-phospho-beta-D-ribosylamino)methylideneamino]imidazole-4-carboxamide = 5-[(5-phospho-1-deoxy-D-ribulos-1-ylimino)methylamino]-1-(5-phospho-beta-D-ribosyl)imidazole-4-carboxamide. It participates in amino-acid biosynthesis; L-histidine biosynthesis; L-histidine from 5-phospho-alpha-D-ribose 1-diphosphate: step 4/9. The protein is 1-(5-phosphoribosyl)-5-[(5-phosphoribosylamino)methylideneamino] imidazole-4-carboxamide isomerase of Bacillus cereus (strain Q1).